The following is a 119-amino-acid chain: Ribonuclease P protein component (119 aa).

The protein belongs to the RnpA family. Consists of a catalytic RNA component (M1 or rnpB) and a protein subunit.

The catalysed reaction is Endonucleolytic cleavage of RNA, removing 5'-extranucleotides from tRNA precursor.. Its function is as follows. RNaseP catalyzes the removal of the 5'-leader sequence from pre-tRNA to produce the mature 5'-terminus. It can also cleave other RNA substrates such as 4.5S RNA. The protein component plays an auxiliary but essential role in vivo by binding to the 5'-leader sequence and broadening the substrate specificity of the ribozyme. This is Ribonuclease P protein component from Histophilus somni (strain 129Pt) (Haemophilus somnus).